The chain runs to 493 residues: Cysteine--tRNA ligase (493 aa).

A Zn(2+)-binding site is contributed by C29. The 'HIGH' region signature appears at V31–H41. The segment at K154–K179 is disordered. Positions 213, 238, and 242 each coordinate Zn(2+). The 'KMSKS' region signature appears at K270–S274. Residue K273 participates in ATP binding.

Belongs to the class-I aminoacyl-tRNA synthetase family. Monomer. Zn(2+) is required as a cofactor.

It is found in the cytoplasm. It catalyses the reaction tRNA(Cys) + L-cysteine + ATP = L-cysteinyl-tRNA(Cys) + AMP + diphosphate. The chain is Cysteine--tRNA ligase from Synechococcus sp. (strain CC9605).